The primary structure comprises 968 residues: MATATTTATAAFSGVVSVGTETRRIYSFSHLQPSAAFPAKPSSFKSLKLKQSARLTRRLDHRPFVVRCEASSSNGRLTQQEFTEMAWQSIVSSPDVAKENKQQIVETEHLMKALLEQKNGLARRIFSKIGVDNTKVLEATEKFIQRQPKVYGDAAGSMLGRDLEALFQRARQFKKDLKDSYVSVEHLVLAFADDKRFGKQLFKDFQISERSLKSAIESIRGKQSVIDQDPEGKYEALEKYGKDLTAMAREGKLDPVIGRDDEIRRCIQILSRRTKNNPVLIGEPGVGKTAISEGLAQRIVQGDVPQALMNRKLISLDMGALIAGAKYRGEFEDRLKAVLKEVTDSEGQIILFIDEIHTVVGAGATNGAMDAGNLLKPMLGRGELRCIGATTLDEYRKYIEKDPALERRFQQVYVDQPTVEDTISILRGLRERYELHHGVRISDSALVEAAILSDRYISGRFLPDKAIDLVDEAAAKLKMEITSKPTALDELDRSVIKLEMERLSLTNDTDKASRERLNRIETELVLLKEKQAELTEQWEHERSVMSRLQSIKEEIDRVNLEIQQAEREYDLNRAAELKYGSLNSLQRQLNEAEKELNEYLSSGKSMFREEVLGSDIAEIVSKWTGIPVSKLQQSERDKLLHLEEELHKRVVGQNPAVTAVAEAIQRSRAGLSDPGRPIASFMFMGPTGVGKTELAKALASYMFNTEEALVRIDMSEYMEKHAVSRLIGAPPGYVGYEEGGQLTETVRRRPYSVILFDEIEKAHGDVFNVFLQILDDGRVTDSQGRTVSFTNTVIIMTSNVGSQFILNNTDDDANELSYETIKERVMNAARSIFRPEFMNRVDEYIVFKPLDREQINRIVRLQLARVQKRIADRKMKINITDAAVDLLGSLGYDPNYGARPVKRVIQQNIENELAKGILRGDFKEEDGILIDTEVTAFSNGQLPQQKLTFKKIESETADAEQEEAAFSK.

The N-terminal 67 residues, 1-67 (MATATTTATA…RLDHRPFVVR (67 aa)), are a transit peptide targeting the chloroplast. The Clp R domain occupies 78–222 (TQQEFTEMAW…KSAIESIRGK (145 aa)). 2 repeat regions span residues 82 to 147 (FTEM…IQRQ) and 159 to 222 (LGRD…IRGK). An i region spans residues 237–485 (LEKYGKDLTA…KLKMEITSKP (249 aa)). 282–289 (GEPGVGKT) is an ATP binding site. Residues 488–606 (LDELDRSVIK…NEYLSSGKSM (119 aa)) are a coiled coil. Residues 611–802 (VLGSDIAEIV…VIIMTSNVGS (192 aa)) form an II region. Residue 685 to 692 (GPTGVGKT) coordinates ATP.

Belongs to the ClpA/ClpB family.

The protein resides in the plastid. Its subcellular location is the chloroplast. Functionally, molecular chaperone essential for chloroplast development and seedling viability. Mediates internal thylakoid membrane formation and confers thermotolerance to chloroplasts during heat stress. The chain is Chaperone protein ClpB3, chloroplastic (CLPB3) from Arabidopsis thaliana (Mouse-ear cress).